The following is a 4493-amino-acid chain: Mucin-17 (4493 aa).

The N-terminal stretch at 1–25 (MPRPGTMALCLLTLVLSLLPPQAAA) is a signal peptide. Residues 26 to 4393 (EQDLSVNRAV…QGTQKSLVYG (4368 aa)) are Extracellular-facing. Positions 88 to 105 (NPEMTSIESSVTSDTPGV) are enriched in polar residues. Disordered stretches follow at residues 88 to 159 (NPEM…SISS), 188 to 223 (LTTS…SMPA), 248 to 277 (TISA…STPL), and 306 to 344 (VITS…ASTM). Residues 106–146 (SSTRMTPTESRTTSESTSDSTTLFPSSTEDTSSPTTPEGTD) show a composition bias toward low complexity. Polar residues predominate over residues 148–159 (PMSTPSEESISS). 57 tandem repeats follow at residues 185-245 (STPL…EIST), 246-300 (PVTI…TTPA), 301-361 (ATNI…PVDT), 362-418 (STLV…TIPV), 420-477 (SKTF…TTPV), 479-538 (SKTQ…PVDT), 539-597 (STPV…PADS), 598-654 (NTFV…TTPV), 656-715 (SNTP…PVDT), 716-774 (STPV…PLDT), 775-831 (STHI…TTPV), 833-892 (SNSP…PVDT), 893-951 (STPV…PVDT), 952-1010 (STPV…PVDS), 1011-1069 (NTPL…PADT), 1070-1121 (STPV…ASTL), 1122-1187 (STTP…PVDS), 1188-1246 (KTQV…PVDT), 1247-1305 (STPV…PVDT), 1306-1364 (KGPV…PVDN), 1365-1423 (STPV…PVDT), 1424-1482 (STPG…PVDS), 1483-1541 (NSPV…PAVT), 1542-1600 (STPV…PIDS), 1601-1656 (KTQV…TTPV), 1658-1717 (SNSP…PVDN), 1718-1776 (STPV…PIDT), 1777-1835 (STPV…PVDS), 1836-1895 (NSPV…AVTS), 1896-1951 (TPVT…TTLA), 1953-2012 (TRTP…PVDT), 2013-2071 (STPA…PVDS), 2072-2127 (KTQV…TTPV), 2129-2188 (SNSP…PVDT), 2189-2247 (STPV…PVDT), 2248-2306 (STPV…PVDS), 2307-2365 (NTPF…PADT), 2366-2424 (STPV…PVDT), 2425-2483 (STPV…PVDT), 2484-2540 (STPM…TTPV), 2542-2601 (SNSP…PVDT), 2602-2653 (SIPV…ASTL), 2654-2719 (STTP…PVDT), 2720-2770 (STPV…EAST), 2772-2837 (STTA…PVDT), 2838-2896 (STPV…PVDT), 2897-2955 (SIPV…PVDT), 2956-3014 (RTPV…PADT), 3015-3073 (STPV…PVDS), 3074-3132 (NSPV…PVDT), 3133-3191 (STPV…PVDT), 3192-3247 (STPV…TTPV), 3249-3308 (SNTP…PADT), 3309-3367 (STPV…PVDT), 3368-3426 (STPV…PVDS), 3427-3485 (NTLV…PVDT), and 3486-3544 (STPV…PVDS). A 59 X approximate tandem repeats region spans residues 185–3727 (STPLTTSTQA…SVVTSTPVTT (3543 aa)). The span at 188–210 (LTTSTQASSSPTTPESTTIPKST) shows a compositional bias: low complexity. Over residues 211–223 (NSEGSTPLTSMPA) the composition is skewed to polar residues. The segment covering 308–323 (TSTEASSSPTTAEGTS) has biased composition (low complexity). Positions 324 to 344 (IPTSTYTEGSTPLTSTPASTM) are enriched in polar residues. Over residues 425–441 (TTASEASSSPTTAEDTS) the composition is skewed to low complexity. 6 disordered regions span residues 425–629 (TTAS…ERGT), 644–868 (SEAS…TPLT), 886–1104 (STTP…TPLT), 1116–1163 (SEAS…TPLA), 1175–1279 (SEAN…GSTL), and 1296–1338 (STLL…GRTP). Over residues 442-483 (IATSTPSEGSTPLTSMPVSTTPVASSEASNLSTTPVDSKTQV) the composition is skewed to polar residues. Asparagine 471 carries an N-linked (GlcNAc...) asparagine glycan. Low complexity predominate over residues 484 to 497 (TTSTEASSSPPTAE). The span at 498–528 (VNSMPTSTPSEGSTPLTSMSVSTMPVASSEA) shows a compositional bias: polar residues. 2 stretches are compositionally biased toward low complexity: residues 529-573 (STLS…TPLT) and 584-618 (SSEA…EGTS). 2 stretches are compositionally biased toward polar residues: residues 619-629 (MPTSTYSERGT) and 644-660 (SEAS…NTPV). The span at 661–677 (TTSTEATSSSTTAEGTS) shows a compositional bias: low complexity. Polar residues predominate over residues 678-705 (MPTSTYTEGSTPLTSMPVNTTLVASSEA). Asparagine 696 carries N-linked (GlcNAc...) asparagine glycosylation. Residues 706-733 (STLSTTPVDTSTPVTTSTEASSSPTTAD) are compositionally biased toward low complexity. The segment covering 737-754 (MPTSTPSEGSTPLTSMPV) has biased composition (polar residues). A compositionally biased stretch (low complexity) spans 755 to 776 (SKTLLTSSEASTLSTTPLDTST). Residues 777 to 832 (HITTSTEASCSPTTTEGTSMPISTPSEGSPLLTSIPVSITPVTSPEASTLSTTPVD) show a composition bias toward polar residues. Low complexity predominate over residues 833 to 849 (SNSPVTTSTEVSSSPTP). Residues 854 to 868 (SMPTSTYSEGRTPLT) are compositionally biased toward polar residues. Positions 886 to 900 (STTPVDTSTPVTNST) are enriched in low complexity. A glycan (N-linked (GlcNAc...) asparagine) is linked at asparagine 898. Residues 901–944 (EARSSPTTSEGTSMPTSTPGEGSTPLTSMPDSTTPVVSSEARTL) are compositionally biased toward polar residues. Residues 945–972 (SATPVDTSTPVTTSTEATSSPTTAEGTS) show a composition bias toward low complexity. The span at 973 to 1011 (IPTSTPSEGTTPLTSTPVSHTLVANSEASTLSTTPVDSN) shows a compositional bias: polar residues. Over residues 1012 to 1021 (TPLTTSTEAS) the composition is skewed to low complexity. The span at 1029 to 1062 (GTSMPTSTPSEGSTPLTRMPVSTTMVASSETSTL) shows a compositional bias: polar residues. Residues 1063–1090 (STTPADTSTPVTTYSQASSSSTTADGTS) show a composition bias toward low complexity. Polar residues-rich tracts occupy residues 1091–1104 (MPTS…TPLT) and 1116–1132 (SEAS…SIPV). Residues 1133-1149 (TTSTEASSSPTTAEGTS) show a composition bias toward low complexity. Polar residues-rich tracts occupy residues 1175–1198 (SEAN…TEAS) and 1205–1222 (EVTS…TPLT). The segment covering 1237–1279 (STLSTSPVDTSTPVTTSAETSSSPTTAEGTSLPTSTTSEGSTL) has biased composition (low complexity). 2 stretches are compositionally biased toward polar residues: residues 1310–1320 (VTSNEVSSSPT) and 1326–1338 (SMPT…GRTP). A glycan (N-linked (GlcNAc...) asparagine) is linked at asparagine 1345. The segment covering 1360–1394 (TPVDNSTPVTTSTEACSSPTTSEGTSMPNSNPSEG) has biased composition (polar residues). Disordered regions lie at residues 1360–1516 (TPVD…STAL), 1537–1575 (TPAV…STPL), 1590–1930 (ANTL…PLTS), 1947–2163 (STTL…RTPL), 2177–2281 (AIST…TTPL), 2295–2501 (EVST…TTAE), 2524–2630 (TTPV…TPSE), 2647–2693 (SSEA…RSTP), 2709–2751 (ASTL…DGST), 2765–2853 (SSEA…SPTT), 2879–2925 (TPVA…TPSE), 2942–3167 (GSEA…TPLT), 3182–3577 (STLS…GSSS), 3589–3635 (TSSE…EVST), 3667–3701 (ITST…TMPV), 3785–3812 (MTTA…TSER), 3829–3849 (PSEA…LLTS), 3892–3914 (ASIA…DTAS), 3965–3988 (VITS…FSTT), and 4008–4129 (STAP…TPTV). Low complexity-rich tracts occupy residues 1395 to 1415 (TTPL…EAST) and 1423 to 1442 (TSTP…TAEG). Residues 1461 to 1483 (PVSNTPVANSEASTLSTTPVDSN) are compositionally biased toward polar residues. The span at 1484 to 1499 (SPVVTSTAVSSSPTPA) shows a compositional bias: low complexity. Residues 1504-1516 (IAISTPSEGSTAL) are compositionally biased toward polar residues. Positions 1537–1547 (TPAVTSTPVTT) are enriched in low complexity. Polar residues-rich tracts occupy residues 1548–1575 (YSQA…STPL) and 1590–1604 (ANTL…KTQV). Over residues 1605-1620 (TASTEASSSTTAEGSS) the composition is skewed to low complexity. Polar residues-rich tracts occupy residues 1621-1673 (MTIS…SSPT) and 1679-1775 (SMPT…TPID). Residues 1776–1797 (TSTPVTTSTEATSSPTTAEGTS) are compositionally biased toward low complexity. Residues 1798–1836 (IPTSTLSEGMTPLTSTPVSHTLVANSEASTLSTTPVDSN) are compositionally biased toward polar residues. Residues 1837–1852 (SPVVTSTAVSSSPTPA) are compositionally biased toward low complexity. A compositionally biased stretch (polar residues) spans 1856-1883 (SIATSTPSEGSTALTSIPVSTTTVASSE). Residues 1884–1900 (TNTLSTTPAVTSTPVTT) are compositionally biased toward low complexity. 2 stretches are compositionally biased toward polar residues: residues 1901 to 1921 (YAQV…TSTP) and 1947 to 1976 (STTL…TSMP). The span at 1984–2033 (STPLTSMPLSTTLVVSSEASTLSTTPVDTSTPATTSTEGSSSPTTAGGTS) shows a compositional bias: low complexity. Composition is skewed to polar residues over residues 2034-2043 (IQTSTPSERT) and 2051-2077 (VSTT…QVTN). Asparagine 2077 carries an N-linked (GlcNAc...) asparagine glycan. Residues 2078–2091 (STEASSSATAEGSS) are compositionally biased toward low complexity. Polar residues predominate over residues 2092–2156 (MTISAPSEGS…EGTSMQTSTY (65 aa)). The span at 2177–2196 (AISTLSTTPVDTSTPVTNST) shows a compositional bias: low complexity. An N-linked (GlcNAc...) asparagine glycan is attached at asparagine 2194. Polar residues predominate over residues 2197-2240 (EARSSPTTSEGTSMPTSTPSEGSTPFTSMPVSTMPVVTSEASTL). The span at 2241 to 2268 (SATPVDTSTPVTTSTEATSSPTTAEGTS) shows a compositional bias: low complexity. Polar residues-rich tracts occupy residues 2269 to 2281 (IPTS…TTPL) and 2295 to 2307 (EVST…VDSN). Over residues 2308 to 2317 (TPFTTSTEAS) the composition is skewed to low complexity. A compositionally biased stretch (polar residues) spans 2325–2358 (GTSMPTSTSSEGNTPLTRMPVSTTMVASFETSTL). Low complexity predominate over residues 2359 to 2371 (STTPADTSTPVTT). A compositionally biased stretch (polar residues) spans 2372–2395 (YSQAGSSPTTADDTSMPTSTYSEG). Low complexity-rich tracts occupy residues 2396-2445 (STPL…EGTS) and 2462-2499 (PVST…SPTT). Polar residues predominate over residues 2524 to 2547 (TTPVASPEASTLSTTPVDSNSPVV). Over residues 2548–2563 (TSTEISSSATSAEGTS) the composition is skewed to low complexity. Residues 2564-2576 (MPTSTYSEGSTPL) show a composition bias toward polar residues. The span at 2586–2617 (LASSEASTLSTTPVDTSIPVTTSTETSSSPTT) shows a compositional bias: low complexity. Residues 2618-2628 (AKDTSMPISTP) are compositionally biased toward polar residues. Residues 2654-2681 (STTPVDTRTLVTTSTGTSSSPTTAEGSS) are compositionally biased toward low complexity. Residues 2682 to 2693 (MPTSTPGERSTP) show a composition bias toward polar residues. Positions 2710 to 2740 (STLSTTPVDTSTPVTTSAEASSSPTTAEGTS) are enriched in low complexity. The segment covering 2741–2751 (MRISTPSDGST) has biased composition (polar residues). 2 stretches are compositionally biased toward low complexity: residues 2765 to 2816 (SSEA…TSMP) and 2829 to 2853 (TLST…SPTT). The span at 2879–2900 (TPVASSEASTLSTTPVDTSIPV) shows a compositional bias: polar residues. 2 stretches are compositionally biased toward low complexity: residues 2901–2917 (TTST…EGTS) and 2950–2976 (TTPV…EGTS). Over residues 2988-3009 (PLTSMSVSTMPVASSEASTLSR) the composition is skewed to polar residues. The span at 3010–3031 (TPADTSTPVTTSTEASSSPTTA) shows a compositional bias: low complexity. Positions 3037–3057 (PISTPSEGSTPLTSIPVSTTP) are enriched in polar residues. 2 stretches are compositionally biased toward low complexity: residues 3073–3089 (SNSP…SPTP) and 3104–3140 (STPL…TTST). Residues 3141–3166 (EAHSSPTTSEGTSMPTSTPSEGSTPL) show a composition bias toward polar residues. Over residues 3185–3211 (SATPVDTSTPVTTSTEATSSTTAEGTS) the composition is skewed to low complexity. Residues 3212-3253 (IPTSTPSEGMTPLTSVPVSNTPVASSEASILSTTPVDSNTPL) show a composition bias toward polar residues. Residues 3254–3267 (TTSTEASSSPPTAE) show a composition bias toward low complexity. Residues 3268 to 3288 (GTSMPTSTPSEGSTPLTSMPV) show a composition bias toward polar residues. The span at 3289 to 3314 (STTTVASSETSTLSTTPADTSTPVTT) shows a compositional bias: low complexity. Residues 3329–3357 (SMPTSTYSEGSTPLTNMSFSTTPVVSSEA) are compositionally biased toward polar residues. N-linked (GlcNAc...) asparagine glycosylation is present at asparagine 3344. Over residues 3358 to 3375 (STLSTTPVDTSTPVTTST) the composition is skewed to low complexity. Over residues 3376–3401 (EASLSPTTAEGTSIPTSSPSEGTTPL) the composition is skewed to polar residues. Residues 3405–3414 (PVSTTPVVSS) show a composition bias toward low complexity. Composition is skewed to polar residues over residues 3415–3441 (EVNT…SSPT) and 3447–3475 (SLPT…SSEA). The span at 3476–3501 (STLSTTPVDTSTPVTTSSPTNSSPTT) shows a compositional bias: low complexity. 2 stretches are compositionally biased toward polar residues: residues 3502-3549 (AEVT…TFVT) and 3558-3571 (PATL…MSTP). Residues 3589–3616 (TSSEASTPSTPSVDRSTPVTTSTQSNST) are compositionally biased toward low complexity. 2 repeat units span residues 3604 to 3662 (STPV…PVDT) and 3663 to 3727 (STPV…PVTT). Over residues 3626-3635 (PMSTPSEVST) the composition is skewed to polar residues. Residues 3667–3679 (ITSTQVSSSPVTP) are compositionally biased toward low complexity. Polar residues-rich tracts occupy residues 3690–3701 (SEGSTPLTTMPV) and 3785–3806 (MTTA…TMPM). Low complexity-rich tracts occupy residues 3967–3988 (TSTE…FSTT), 4008–4083 (STAP…SSTT), and 4090–4129 (TTMT…TPTV). Residue asparagine 4116 is glycosylated (N-linked (GlcNAc...) asparagine). Positions 4131–4170 (RTTTCFGDGCQNTASRCKNGGTWDGLKCQCPNLYYGELCE) constitute an EGF-like domain. 3 cysteine pairs are disulfide-bonded: cysteine 4135–cysteine 4147, cysteine 4140–cysteine 4158, and cysteine 4160–cysteine 4169. The SEA domain occupies 4184–4291 (ISAQMELTVT…QQIMINDICS (108 aa)). 5 N-linked (GlcNAc...) asparagine glycosylation sites follow: asparagine 4205, asparagine 4236, asparagine 4267, asparagine 4297, and asparagine 4305. A helical transmembrane segment spans residues 4394–4414 (LVGAGVVLMLIILVALLMLVF). Residues 4415–4493 (RSKREVKRQK…QRPQVMTTSF (79 aa)) are Cytoplasmic-facing.

In terms of assembly, interacts via its C-terminus with PDZK1 and this interaction appears important for proper localization. In terms of processing, probably cleaved within the SEA domain. Post-translationally, N-glycosylated. Contains high mannose and complex-type glycans. The forms containing the complex type glycans localize to the cell surface. Not O-glycosylated. Expressed almost exclusively in the intestine. Expression is especially high in both the duodenum and transverse colon. Expressed in mature absorptive cells of the small intestinal villi. No expression is detected in goblet cells. Highly expressed in pancreatic adenocarcinoma tissue (at protein level). Expression is not detectable in normal pancreas, in pancreatitis or in cell lines derived from other cancers.

Its subcellular location is the cell membrane. The protein resides in the secreted. Probably plays a role in maintaining homeostasis on mucosal surfaces. The chain is Mucin-17 (MUC17) from Homo sapiens (Human).